Here is a 137-residue protein sequence, read N- to C-terminus: Large ribosomal subunit protein uL22 (137 aa).

It belongs to the universal ribosomal protein uL22 family. In terms of assembly, part of the 50S ribosomal subunit.

Its function is as follows. This protein binds specifically to 23S rRNA; its binding is stimulated by other ribosomal proteins, e.g. L4, L17, and L20. It is important during the early stages of 50S assembly. It makes multiple contacts with different domains of the 23S rRNA in the assembled 50S subunit and ribosome. Functionally, the globular domain of the protein is located near the polypeptide exit tunnel on the outside of the subunit, while an extended beta-hairpin is found that lines the wall of the exit tunnel in the center of the 70S ribosome. This Flavobacterium johnsoniae (strain ATCC 17061 / DSM 2064 / JCM 8514 / BCRC 14874 / CCUG 350202 / NBRC 14942 / NCIMB 11054 / UW101) (Cytophaga johnsonae) protein is Large ribosomal subunit protein uL22.